We begin with the raw amino-acid sequence, 311 residues long: Meiotically up-regulated gene 146 protein (311 aa).

The protein resides in the cytoplasm. Its subcellular location is the nucleus. Its function is as follows. Has a role in sporulation. This Schizosaccharomyces pombe (strain 972 / ATCC 24843) (Fission yeast) protein is Meiotically up-regulated gene 146 protein (mug146).